A 547-amino-acid chain; its full sequence is 2-succinyl-5-enolpyruvyl-6-hydroxy-3-cyclohexene-1-carboxylate synthase (547 aa).

It belongs to the TPP enzyme family. MenD subfamily. In terms of assembly, homodimer. It depends on Mg(2+) as a cofactor. Mn(2+) serves as cofactor. Requires thiamine diphosphate as cofactor.

The enzyme catalyses isochorismate + 2-oxoglutarate + H(+) = 5-enolpyruvoyl-6-hydroxy-2-succinyl-cyclohex-3-ene-1-carboxylate + CO2. Its pathway is quinol/quinone metabolism; 1,4-dihydroxy-2-naphthoate biosynthesis; 1,4-dihydroxy-2-naphthoate from chorismate: step 2/7. The protein operates within quinol/quinone metabolism; menaquinone biosynthesis. Its function is as follows. Catalyzes the thiamine diphosphate-dependent decarboxylation of 2-oxoglutarate and the subsequent addition of the resulting succinic semialdehyde-thiamine pyrophosphate anion to isochorismate to yield 2-succinyl-5-enolpyruvyl-6-hydroxy-3-cyclohexene-1-carboxylate (SEPHCHC). The protein is 2-succinyl-5-enolpyruvyl-6-hydroxy-3-cyclohexene-1-carboxylate synthase of Mycobacterium sp. (strain JLS).